The sequence spans 170 residues: Adenine phosphoribosyltransferase (170 aa).

Belongs to the purine/pyrimidine phosphoribosyltransferase family. As to quaternary structure, homodimer.

It localises to the cytoplasm. The catalysed reaction is AMP + diphosphate = 5-phospho-alpha-D-ribose 1-diphosphate + adenine. It functions in the pathway purine metabolism; AMP biosynthesis via salvage pathway; AMP from adenine: step 1/1. Catalyzes a salvage reaction resulting in the formation of AMP, that is energically less costly than de novo synthesis. The sequence is that of Adenine phosphoribosyltransferase from Lactococcus lactis subsp. cremoris (strain SK11).